The primary structure comprises 520 residues: Laccase-1 (520 aa).

The N-terminal stretch at methionine 1–alanine 21 is a signal peptide. 2 Plastocyanin-like domains span residues isoleucine 23–tyrosine 148 and valine 160–tyrosine 302. Asparagine 72 and asparagine 75 each carry an N-linked (GlcNAc...) asparagine glycan. Residues histidine 85, histidine 87, histidine 130, and histidine 132 each contribute to the Cu cation site. 2 disulfide bridges follow: cysteine 106–cysteine 509 and cysteine 138–cysteine 226. Asparagine 229, asparagine 238, asparagine 354, and asparagine 361 each carry an N-linked (GlcNAc...) asparagine glycan. The Plastocyanin-like 3 domain occupies threonine 369–aspartate 491. Cu cation is bound by residues histidine 416, histidine 419, histidine 421, histidine 473, cysteine 474, histidine 475, and histidine 479.

It belongs to the multicopper oxidase family. As to quaternary structure, homodimer. Cu cation is required as a cofactor.

Its subcellular location is the secreted. The catalysed reaction is 4 hydroquinone + O2 = 4 benzosemiquinone + 2 H2O. In terms of biological role, lignin degradation and detoxification of lignin-derived products. The polypeptide is Laccase-1 (Trametes villosa (White-rot fungus)).